The following is a 689-amino-acid chain: DNA-directed RNA polymerase subunit beta' (689 aa).

Zn(2+)-binding residues include cysteine 69, cysteine 71, cysteine 87, and cysteine 90. Mg(2+) is bound by residues aspartate 489, aspartate 491, and aspartate 493.

It belongs to the RNA polymerase beta' chain family. RpoC1 subfamily. In terms of assembly, in plastids the minimal PEP RNA polymerase catalytic core is composed of four subunits: alpha, beta, beta', and beta''. When a (nuclear-encoded) sigma factor is associated with the core the holoenzyme is formed, which can initiate transcription. Requires Mg(2+) as cofactor. Zn(2+) serves as cofactor.

It localises to the plastid. The protein resides in the chloroplast. It catalyses the reaction RNA(n) + a ribonucleoside 5'-triphosphate = RNA(n+1) + diphosphate. In terms of biological role, DNA-dependent RNA polymerase catalyzes the transcription of DNA into RNA using the four ribonucleoside triphosphates as substrates. The polypeptide is DNA-directed RNA polymerase subunit beta' (Lactuca sativa (Garden lettuce)).